The chain runs to 357 residues: tRNA-specific 2-thiouridylase MnmA (357 aa).

ATP contacts are provided by residues 7–14 and M33; that span reads AMSGGVDS. Catalysis depends on C101, which acts as the Nucleophile. Residues C101 and C198 are joined by a disulfide bond. ATP is bound at residue G125. Residues 148-150 are interaction with tRNA; that stretch reads KDQ. C198 serves as the catalytic Cysteine persulfide intermediate.

It belongs to the MnmA/TRMU family.

Its subcellular location is the cytoplasm. It carries out the reaction S-sulfanyl-L-cysteinyl-[protein] + uridine(34) in tRNA + AH2 + ATP = 2-thiouridine(34) in tRNA + L-cysteinyl-[protein] + A + AMP + diphosphate + H(+). Catalyzes the 2-thiolation of uridine at the wobble position (U34) of tRNA, leading to the formation of s(2)U34. The chain is tRNA-specific 2-thiouridylase MnmA from Herpetosiphon aurantiacus (strain ATCC 23779 / DSM 785 / 114-95).